The following is a 295-amino-acid chain: MITELHGIDIRENEPLKHYTYTKVGGPADFLAFPRNHYELSRIVVYANKENMPWLVLGNASNLIVRDGGIRGFVIMFDKLNAVHLNGYTLEAEAGANLIETTKIAKFHSLTGFEFACGIPGSIGGAVFMNAGAYGGEISHIFLSAKVLTSSGEIKTISARDMAFGYRHSAIQETGDIVISAKFALKPGNYDTISQEMNRLNHLRQLKQPLEFPSCGSVFKRPPGHFAGQLIMEANLKGHRIGGVEVSEKHAGFMINVADGTAKDYEDLIAYVIETVENHSGVRLEPEVRIIGENL.

In terms of domain architecture, FAD-binding PCMH-type spans 23-188 (KVGGPADFLA…ISAKFALKPG (166 aa)). Residue Arg-167 is part of the active site. Catalysis depends on Ser-217, which acts as the Proton donor. Glu-287 is a catalytic residue.

The protein belongs to the MurB family. FAD is required as a cofactor.

It is found in the cytoplasm. It catalyses the reaction UDP-N-acetyl-alpha-D-muramate + NADP(+) = UDP-N-acetyl-3-O-(1-carboxyvinyl)-alpha-D-glucosamine + NADPH + H(+). It functions in the pathway cell wall biogenesis; peptidoglycan biosynthesis. Its function is as follows. Cell wall formation. The protein is UDP-N-acetylenolpyruvoylglucosamine reductase of Streptococcus pyogenes serotype M3 (strain ATCC BAA-595 / MGAS315).